The following is a 192-amino-acid chain: HTH-type transcriptional repressor SCO4008 (192 aa).

In terms of domain architecture, HTH tetR-type spans 7–67; sequence EATKARIFEA…SVLEKKMLDL (61 aa). The H-T-H motif DNA-binding region spans 30-49; it reads RIDRIAAEARANKQLIYAYY.

Homodimer. Four dimers bind to the two operator sites.

Binding of a wide range of cationic hydrophobic compounds to SCO4008 causes a decrease in DNA-binding, probably via allosteric conformational change of SCO4008. In terms of biological role, probably regulates the expression of its own gene and the adjacent SCO4007 gene by binding to two operator sites in the SCO4007-SCO4008 intergenic region. This is HTH-type transcriptional repressor SCO4008 from Streptomyces coelicolor (strain ATCC BAA-471 / A3(2) / M145).